Here is a 245-residue protein sequence, read N- to C-terminus: Chloride intracellular channel protein 2 (245 aa).

The tract at residues 1–96 (MASLALNTQA…EEFLEKTLAP (96 aa)) is required for insertion into the membrane. Residue glutamate 25 participates in glutathione binding. A G-site motif is present at residues 30–33 (CPFC). An intrachain disulfide couples cysteine 30 to cysteine 33. Residues 32–52 (FCQRLFMILWLKGVKFNVTTI) traverse the membrane as a helical segment. A GST C-terminal domain is found at 76–239 (NKELKTDFIK…PEDKEIENTY (164 aa)). Residue histidine 227 coordinates glutathione.

The protein belongs to the chloride channel CLIC family. Monomer. Interacts with TRAPPC2 and RYR2.

It is found in the cytoplasm. Its subcellular location is the membrane. The catalysed reaction is chloride(in) = chloride(out). The enzyme catalyses tert-butyl hydroperoxide + 2 glutathione = tert-butanol + glutathione disulfide + H2O. It carries out the reaction cumene hydroperoxide + 2 glutathione = 2-phenylpropan-2-ol + glutathione disulfide + H2O. Its function is as follows. In the soluble state, catalyzes glutaredoxin-like thiol disulfide exchange reactions with reduced glutathione as electron donor. Displays weak glutathione peroxidase activity. Can insert into membranes and form chloride ion channels. Membrane insertion seems to be redox-regulated and may occur only under oxidizing conditions. Modulates the activity of RYR2 and inhibits calcium influx. The protein is Chloride intracellular channel protein 2 of Rattus norvegicus (Rat).